A 488-amino-acid polypeptide reads, in one-letter code: Bifunctional protein GlmU (488 aa).

The tract at residues 1–237 (MPRTRTPLAA…AEEASGVNDR (237 aa)) is pyrophosphorylase. Residues 13 to 16 (LAAG), K27, Q82, 87 to 88 (GT), 110 to 112 (SGD), G149, E164, N179, and N235 contribute to the UDP-N-acetyl-alpha-D-glucosamine site. Position 112 (D112) interacts with Mg(2+). N235 lines the Mg(2+) pocket. The tract at residues 238-258 (IELARANRVMVGRLAEAFMRA) is linker. The N-acetyltransferase stretch occupies residues 259-488 (GVTIEDPARF…KGRPAARRAS (230 aa)). R341 and K359 together coordinate UDP-N-acetyl-alpha-D-glucosamine. H371 acts as the Proton acceptor in catalysis. Positions 374 and 385 each coordinate UDP-N-acetyl-alpha-D-glucosamine. Residues A388, 394–395 (NY), S413, A431, and R448 each bind acetyl-CoA. Positions 459–488 (AQRQAEKQMKGTATGPAPARKGRPAARRAS) are disordered. Residues 478–488 (RKGRPAARRAS) show a composition bias toward basic residues.

The protein in the N-terminal section; belongs to the N-acetylglucosamine-1-phosphate uridyltransferase family. It in the C-terminal section; belongs to the transferase hexapeptide repeat family. In terms of assembly, homotrimer. Mg(2+) is required as a cofactor.

It is found in the cytoplasm. It carries out the reaction alpha-D-glucosamine 1-phosphate + acetyl-CoA = N-acetyl-alpha-D-glucosamine 1-phosphate + CoA + H(+). The enzyme catalyses N-acetyl-alpha-D-glucosamine 1-phosphate + UTP + H(+) = UDP-N-acetyl-alpha-D-glucosamine + diphosphate. It participates in nucleotide-sugar biosynthesis; UDP-N-acetyl-alpha-D-glucosamine biosynthesis; N-acetyl-alpha-D-glucosamine 1-phosphate from alpha-D-glucosamine 6-phosphate (route II): step 2/2. It functions in the pathway nucleotide-sugar biosynthesis; UDP-N-acetyl-alpha-D-glucosamine biosynthesis; UDP-N-acetyl-alpha-D-glucosamine from N-acetyl-alpha-D-glucosamine 1-phosphate: step 1/1. Its pathway is bacterial outer membrane biogenesis; LPS lipid A biosynthesis. Catalyzes the last two sequential reactions in the de novo biosynthetic pathway for UDP-N-acetylglucosamine (UDP-GlcNAc). The C-terminal domain catalyzes the transfer of acetyl group from acetyl coenzyme A to glucosamine-1-phosphate (GlcN-1-P) to produce N-acetylglucosamine-1-phosphate (GlcNAc-1-P), which is converted into UDP-GlcNAc by the transfer of uridine 5-monophosphate (from uridine 5-triphosphate), a reaction catalyzed by the N-terminal domain. This is Bifunctional protein GlmU from Anaeromyxobacter dehalogenans (strain 2CP-C).